Consider the following 470-residue polypeptide: DNA primase large subunit (470 aa).

Residues cysteine 279, cysteine 358, cysteine 376, and cysteine 414 each coordinate [4Fe-4S] cluster. Residues 449–470 (EEKKSAKQSNNKENENQSIDEK) form a disordered region.

It belongs to the eukaryotic-type primase large subunit family. In terms of assembly, heterodimer of a small subunit and a large subunit. It depends on [4Fe-4S] cluster as a cofactor.

Functionally, DNA primase is the polymerase that synthesizes small RNA primers for the Okazaki fragments made during discontinuous DNA replication. In Dictyostelium discoideum (Social amoeba), this protein is DNA primase large subunit (prim2).